A 64-amino-acid chain; its full sequence is Large ribosomal subunit protein bL35 (64 aa).

The protein belongs to the bacterial ribosomal protein bL35 family.

This Desulforudis audaxviator (strain MP104C) protein is Large ribosomal subunit protein bL35.